The following is a 117-amino-acid chain: UPF0342 protein LEUM_1212 (117 aa).

Belongs to the UPF0342 family.

In Leuconostoc mesenteroides subsp. mesenteroides (strain ATCC 8293 / DSM 20343 / BCRC 11652 / CCM 1803 / JCM 6124 / NCDO 523 / NBRC 100496 / NCIMB 8023 / NCTC 12954 / NRRL B-1118 / 37Y), this protein is UPF0342 protein LEUM_1212.